The following is a 98-amino-acid chain: MAPINLNLILAFSLALLGVLIYRTHLMSTLLCLEGMMLSLFILMTLLISHFHMYSMAMAPLILLVFSACEAGVGLALLVKISTSYGNDYVQNLNLLQC.

The next 3 helical transmembrane spans lie at 1-21 (MAPI…GVLI), 28-48 (STLL…TLLI), and 59-79 (APLI…ALLV).

This sequence belongs to the complex I subunit 4L family. Core subunit of respiratory chain NADH dehydrogenase (Complex I) which is composed of 45 different subunits.

It is found in the mitochondrion inner membrane. The enzyme catalyses a ubiquinone + NADH + 5 H(+)(in) = a ubiquinol + NAD(+) + 4 H(+)(out). Its function is as follows. Core subunit of the mitochondrial membrane respiratory chain NADH dehydrogenase (Complex I) which catalyzes electron transfer from NADH through the respiratory chain, using ubiquinone as an electron acceptor. Part of the enzyme membrane arm which is embedded in the lipid bilayer and involved in proton translocation. The polypeptide is NADH-ubiquinone oxidoreductase chain 4L (MT-ND4L) (Perameles gunnii (Eastern barred bandicoot)).